The sequence spans 367 residues: Flagellar P-ring protein (367 aa).

The first 21 residues, 1-21 (MYVFKALAGIVLALVATLAHA), serve as a signal peptide directing secretion.

This sequence belongs to the FlgI family. In terms of assembly, the basal body constitutes a major portion of the flagellar organelle and consists of four rings (L,P,S, and M) mounted on a central rod.

The protein resides in the periplasm. Its subcellular location is the bacterial flagellum basal body. Assembles around the rod to form the L-ring and probably protects the motor/basal body from shearing forces during rotation. This Salmonella choleraesuis (strain SC-B67) protein is Flagellar P-ring protein.